Here is a 323-residue protein sequence, read N- to C-terminus: Beta-ketoacyl-[acyl-carrier-protein] synthase III (323 aa).

Active-site residues include Cys-112 and His-249. The ACP-binding stretch occupies residues 250-254 (QANYR). Asn-279 is a catalytic residue.

The protein belongs to the thiolase-like superfamily. FabH family. In terms of assembly, homodimer.

It localises to the cytoplasm. The enzyme catalyses malonyl-[ACP] + acetyl-CoA + H(+) = 3-oxobutanoyl-[ACP] + CO2 + CoA. It participates in lipid metabolism; fatty acid biosynthesis. Catalyzes the condensation reaction of fatty acid synthesis by the addition to an acyl acceptor of two carbons from malonyl-ACP. Catalyzes the first condensation reaction which initiates fatty acid synthesis and may therefore play a role in governing the total rate of fatty acid production. Possesses both acetoacetyl-ACP synthase and acetyl transacylase activities. Its substrate specificity determines the biosynthesis of branched-chain and/or straight-chain of fatty acids. The sequence is that of Beta-ketoacyl-[acyl-carrier-protein] synthase III from Clostridium kluyveri (strain NBRC 12016).